We begin with the raw amino-acid sequence, 492 residues long: Differentially expressed in FDCP 8 homolog (492 aa).

The span at 38–51 shows a compositional bias: gly residues; the sequence is GLGGSGSTGSGSEA. The segment at 38–62 is disordered; that stretch reads GLGGSGSTGSGSEAGGSEESGPQGA. 2 Phorbol-ester/DAG-type zinc fingers span residues 161–214 and 400–453; these read PHHG…KRVC and DHIR…NMIC. A disordered region spans residues 468–492; the sequence is RMKSTEDDDDDDDGVATDDDVTAAE. A compositionally biased stretch (acidic residues) spans 473 to 492; it reads EDDDDDDDGVATDDDVTAAE.

The protein belongs to the DEF8 family.

The chain is Differentially expressed in FDCP 8 homolog from Drosophila melanogaster (Fruit fly).